Reading from the N-terminus, the 91-residue chain is DNA-binding protein HU (91 aa).

It belongs to the bacterial histone-like protein family.

Its function is as follows. Histone-like DNA-binding protein which is capable of wrapping DNA to stabilize it, and thus to prevent its denaturation under extreme environmental conditions. Also seems to act as a fortuitous virulence factor in delayed sequelae by binding to heparan sulfate-proteoglycans in the extracellular matrix of target organs and acting as a nidus for in situ immune complex formation. This Streptococcus mutans serotype c (strain ATCC 700610 / UA159) protein is DNA-binding protein HU (hup).